Here is a 381-residue protein sequence, read N- to C-terminus: Metallophosphoesterase 1 (381 aa).

Residues 15–35 traverse the membrane as a helical segment; the sequence is LIFAFVSVFVFCEYVIYYLVI. A divalent metal cation-binding residues include Asp59, Asp101, Asn139, His234, His288, and His290. The helical transmembrane segment at 341 to 361 threads the bilayer; the sequence is TVLVVYCSSCLIIALITLIHL. A Di-lysine motif motif is present at residues 377-381; it reads KHKTL.

It belongs to the metallophosphoesterase superfamily. MPPE1 family. Mn(2+) is required as a cofactor.

The protein localises to the endoplasmic reticulum-Golgi intermediate compartment membrane. Metallophosphoesterase that catalyzes the removal of a side-chain ethanolamine-phosphate (EtNP) from the second mannose of the GPI-anchor protein intermediate. Participates in the glycan remodeling steps of GPI-anchor maturation to allow an efficient transport of GPI-anchor proteins from the endoplasmic reticulum to the Golgi. The sequence is that of Metallophosphoesterase 1 from Danio rerio (Zebrafish).